We begin with the raw amino-acid sequence, 262 residues long: Serine/arginine-rich SC35-like splicing factor SCL30 (262 aa).

Residues 1 to 14 (MRRYSPPYYSPPRR) are compositionally biased toward low complexity. Disordered stretches follow at residues 1 to 48 (MRRY…SHGS) and 123 to 262 (ASES…VSPR). Phosphoserine is present on residues Ser5, Ser10, and Ser22. Residues 31-42 (GYGGGGGGGGRR) are compositionally biased toward gly residues. An RRM domain is found at 47–125 (GSLLVRNIPL…REITVVVASE (79 aa)). Residues 125-152 (ESRKRPEEMRVKTRTRSREPSGSRDRSH) are compositionally biased toward basic and acidic residues. Residues 153–167 (GRSRSRSISRSRSPR) show a composition bias toward basic residues. Phosphoserine is present on residues Ser182, Ser204, and Ser206. Residue Tyr209 is modified to Phosphotyrosine. Positions 217-239 (PDRDRNGDNEIREKPGYEAEDRR) are enriched in basic and acidic residues. Positions 243 to 262 (RAVSRSPSGSRSRSVEVSPR) are enriched in low complexity. 3 positions are modified to phosphoserine: Ser254, Ser256, and Ser260.

The protein belongs to the splicing factor SR family. SCL subfamily. As to quaternary structure, component of the spliceosome. Interacts with RS2Z33, CYP59, CYP63 and CYP95. Post-translationally, phosphorylated.

Its subcellular location is the nucleus speckle. Its function is as follows. Involved in intron recognition and spliceosome assembly. Probably active at the 5' splice sites. In Arabidopsis thaliana (Mouse-ear cress), this protein is Serine/arginine-rich SC35-like splicing factor SCL30 (SCL30).